The primary structure comprises 333 residues: 1D-myo-inositol 2-acetamido-2-deoxy-alpha-D-glucopyranoside deacetylase (333 aa).

Residues His-18, Asp-21, and His-165 each coordinate Zn(2+).

It belongs to the MshB deacetylase family. It depends on Zn(2+) as a cofactor.

The enzyme catalyses 1D-myo-inositol 2-acetamido-2-deoxy-alpha-D-glucopyranoside + H2O = 1D-myo-inositol 2-amino-2-deoxy-alpha-D-glucopyranoside + acetate. Its function is as follows. Catalyzes the deacetylation of 1D-myo-inositol 2-acetamido-2-deoxy-alpha-D-glucopyranoside (GlcNAc-Ins) in the mycothiol biosynthesis pathway. The polypeptide is 1D-myo-inositol 2-acetamido-2-deoxy-alpha-D-glucopyranoside deacetylase (Corynebacterium jeikeium (strain K411)).